A 145-amino-acid polypeptide reads, in one-letter code: Large ribosomal subunit protein uL13 (145 aa).

The interval 72–91 is disordered; the sequence is DKMYHRHSNHPGGLKSISAG.

Belongs to the universal ribosomal protein uL13 family. Part of the 50S ribosomal subunit.

In terms of biological role, this protein is one of the early assembly proteins of the 50S ribosomal subunit, although it is not seen to bind rRNA by itself. It is important during the early stages of 50S assembly. This is Large ribosomal subunit protein uL13 from Staphylococcus epidermidis (strain ATCC 12228 / FDA PCI 1200).